Here is a 140-residue protein sequence, read N- to C-terminus: Putative pre-16S rRNA nuclease (140 aa).

Belongs to the YqgF nuclease family.

It localises to the cytoplasm. Its function is as follows. Could be a nuclease involved in processing of the 5'-end of pre-16S rRNA. The polypeptide is Putative pre-16S rRNA nuclease (Yersinia pseudotuberculosis serotype IB (strain PB1/+)).